The following is a 261-amino-acid chain: Syntaxin-7 (261 aa).

S2 carries the N-acetylserine modification. Topologically, residues 2–238 (SYTPGIGGDS…DYQRKSRKTL (237 aa)) are cytoplasmic. Position 4 is a phosphothreonine (T4). A Phosphoserine modification is found at S45. Residues 47–68 (ELRQLLQQKQQYTNQLAKETDK) are a coiled coil. Residue S75 is modified to Phosphoserine. Residue T79 is modified to Phosphothreonine. S125, S126, S129, and S205 each carry phosphoserine. The interval 128–148 (VSGGFPEDSSKEKNLVSWESQ) is disordered. Residues 165 to 227 (LRLIHERESS…QQANQQLSRA (63 aa)) form the t-SNARE coiled-coil homology domain. Residues 239–259 (CIIIFILVVRIVIICLIVWGL) traverse the membrane as a helical; Anchor for type IV membrane protein segment. Residues 260–261 (KG) are Vesicular-facing.

Belongs to the syntaxin family. As to quaternary structure, interacts with VPS11, VPS16 and VPS18. Interacts with VPS33A. Forms a SNARE complex with VTI1B, STX8 and VAMP8 which functions in the homotypic fusion of late endosomes. Component of the SNARE complex composed of STX7, STX8, VAMP7 and VTI1B that is required for heterotypic fusion of late endosomes with lysosomes. Interacts with TPC1.

It is found in the early endosome membrane. Functionally, may be involved in protein trafficking from the plasma membrane to the early endosome (EE) as well as in homotypic fusion of endocytic organelles. Mediates the endocytic trafficking from early endosomes to late endosomes and lysosomes. The chain is Syntaxin-7 (Stx7) from Mus musculus (Mouse).